The primary structure comprises 334 residues: Glutaminase (334 aa).

Serine 76, asparagine 126, glutamate 170, asparagine 177, tyrosine 201, tyrosine 253, and valine 271 together coordinate substrate.

It belongs to the glutaminase family. As to quaternary structure, homotetramer.

The catalysed reaction is L-glutamine + H2O = L-glutamate + NH4(+). This is Glutaminase from Trichormus variabilis (strain ATCC 29413 / PCC 7937) (Anabaena variabilis).